We begin with the raw amino-acid sequence, 415 residues long: Serine/threonine transporter SstT (415 aa).

The next 9 membrane-spanning stretches (helical) occupy residues Ile-21 to Ala-41, Leu-45 to Val-65, Ile-83 to Val-103, Ala-142 to Phe-162, Leu-193 to Gly-213, Leu-217 to Val-237, Met-299 to Ile-319, Val-331 to Ile-351, and Phe-358 to Leu-378.

The protein belongs to the dicarboxylate/amino acid:cation symporter (DAACS) (TC 2.A.23) family.

Its subcellular location is the cell inner membrane. It catalyses the reaction L-serine(in) + Na(+)(in) = L-serine(out) + Na(+)(out). The catalysed reaction is L-threonine(in) + Na(+)(in) = L-threonine(out) + Na(+)(out). Its function is as follows. Involved in the import of serine and threonine into the cell, with the concomitant import of sodium (symport system). This chain is Serine/threonine transporter SstT, found in Pectobacterium carotovorum subsp. carotovorum (strain PC1).